An 87-amino-acid polypeptide reads, in one-letter code: Small ribosomal subunit protein bS20 (87 aa).

This sequence belongs to the bacterial ribosomal protein bS20 family.

Functionally, binds directly to 16S ribosomal RNA. The polypeptide is Small ribosomal subunit protein bS20 (Halothermothrix orenii (strain H 168 / OCM 544 / DSM 9562)).